The chain runs to 248 residues: Cell division protein ZapD (248 aa).

This sequence belongs to the ZapD family. As to quaternary structure, interacts with FtsZ.

The protein localises to the cytoplasm. Functionally, cell division factor that enhances FtsZ-ring assembly. Directly interacts with FtsZ and promotes bundling of FtsZ protofilaments, with a reduction in FtsZ GTPase activity. The protein is Cell division protein ZapD of Aliivibrio salmonicida (strain LFI1238) (Vibrio salmonicida (strain LFI1238)).